We begin with the raw amino-acid sequence, 503 residues long: Aspartyl/glutamyl-tRNA(Asn/Gln) amidotransferase subunit B (503 aa).

Belongs to the GatB/GatE family. GatB subfamily. Heterotrimer of A, B and C subunits.

The catalysed reaction is L-glutamyl-tRNA(Gln) + L-glutamine + ATP + H2O = L-glutaminyl-tRNA(Gln) + L-glutamate + ADP + phosphate + H(+). It carries out the reaction L-aspartyl-tRNA(Asn) + L-glutamine + ATP + H2O = L-asparaginyl-tRNA(Asn) + L-glutamate + ADP + phosphate + 2 H(+). Its function is as follows. Allows the formation of correctly charged Asn-tRNA(Asn) or Gln-tRNA(Gln) through the transamidation of misacylated Asp-tRNA(Asn) or Glu-tRNA(Gln) in organisms which lack either or both of asparaginyl-tRNA or glutaminyl-tRNA synthetases. The reaction takes place in the presence of glutamine and ATP through an activated phospho-Asp-tRNA(Asn) or phospho-Glu-tRNA(Gln). This Rhodococcus erythropolis (strain PR4 / NBRC 100887) protein is Aspartyl/glutamyl-tRNA(Asn/Gln) amidotransferase subunit B.